Here is a 385-residue protein sequence, read N- to C-terminus: Odorant receptor 47a (385 aa).

Over 1–33 (MDSFLQVQKSTIALLGFDLFSENREMWKRPYRA) the chain is Cytoplasmic. Residues 34-54 (MNVFSIAAIFPFILAAVLHNW) form a helical membrane-spanning segment. Topologically, residues 55 to 62 (KNVLLLAD) are extracellular. A helical transmembrane segment spans residues 63 to 83 (AMVALLITILGLFKFSMILYL). The Cytoplasmic portion of the chain corresponds to 84–129 (RRDFKRLIDKFRLLMSNEAEQGEEYAEILNAANKQDQRMCTLFRTC). A helical membrane pass occupies residues 130–150 (FLLAWALNSVLPLVRMGLSYW). The Extracellular segment spans residues 151 to 175 (LAGHAEPELPFPCLFPWNIHIIRNY). The helical transmembrane segment at 176–196 (VLSFIWSAFASTGVVLPAVSL) threads the bilayer. Over 197 to 255 (DTIFCSFTSNLCAFFKIAQYKVVRFKGGSLKESQATLNKVFALYQTSLDMCNDLNQCYQ) the chain is Cytoplasmic. A helical membrane pass occupies residues 256–276 (PIICAQFFISSLQLCMLGYLF). At 277–284 (SITFAQTE) the chain is on the extracellular side. A helical membrane pass occupies residues 285–305 (GVYYASFIATIIIQAYIYCYC). At 306–357 (GENLKTESASFEWAIYDSPWHESLGAGGASTSICRSLLISMMRAHRGFRITG) the chain is on the cytoplasmic side. Residues 358-378 (YFFEANMEAFSSIVRTAMSYI) form a helical membrane-spanning segment. The Extracellular segment spans residues 379 to 385 (TMLRSFS).

It belongs to the insect chemoreceptor superfamily. Heteromeric odorant receptor channel (TC 1.A.69) family. Or1a subfamily. As to quaternary structure, interacts with Orco. Complexes exist early in the endomembrane system in olfactory sensory neurons (OSNs), coupling these complexes to the conserved ciliary trafficking pathway. As to expression, expressed with Orco in 40 olfactory receptor neurons in a broad area across the antenna, including both anterior and posterior faces. This expression pattern matches the distribution of the small sensilla basiconica. Expression in the antenna is observed late in antennal development at 93 hours APF.

Its subcellular location is the cell membrane. Odorant receptor which mediates acceptance or avoidance behavior, depending on its substrates. The odorant receptor repertoire encodes a large collection of odor stimuli that vary widely in identity, intensity, and duration. Complexes with Orco to form odorant-sensing units, providing sensitive and prolonged odorant signaling and calcium permeability. They are necessary and sufficient to promote functional reconstitution of odor-evoked signaling in sensory neurons that normally respond only to carbon dioxide. Involved in the behavioral responses to esters. Involved in the behavioral responses to pentyl acetate. This is Odorant receptor 47a (Or47a) from Drosophila melanogaster (Fruit fly).